We begin with the raw amino-acid sequence, 453 residues long: tRNA modification GTPase MnmE (453 aa).

(6S)-5-formyl-5,6,7,8-tetrahydrofolate contacts are provided by R22, E79, and K119. A TrmE-type G domain is found at 215-376 (GMKVVIAGRP…LKQHLKSLMG (162 aa)). N225 is a binding site for K(+). Residues 225-230 (NAGKSS), 244-250 (TEIAGTT), 269-272 (DTAG), and 334-337 (NKAD) contribute to the GTP site. S229 provides a ligand contact to Mg(2+). K(+) is bound by residues T244, I246, and T249. T250 provides a ligand contact to Mg(2+). K453 contributes to the (6S)-5-formyl-5,6,7,8-tetrahydrofolate binding site.

The protein belongs to the TRAFAC class TrmE-Era-EngA-EngB-Septin-like GTPase superfamily. TrmE GTPase family. As to quaternary structure, homodimer. Heterotetramer of two MnmE and two MnmG subunits. The cofactor is K(+).

Its subcellular location is the cytoplasm. Functionally, exhibits a very high intrinsic GTPase hydrolysis rate. Involved in the addition of a carboxymethylaminomethyl (cmnm) group at the wobble position (U34) of certain tRNAs, forming tRNA-cmnm(5)s(2)U34. The polypeptide is tRNA modification GTPase MnmE (Shewanella denitrificans (strain OS217 / ATCC BAA-1090 / DSM 15013)).